The chain runs to 476 residues: Ribosomal protein uS12 methylthiotransferase RimO (476 aa).

The region spanning Asn33 to Pro143 is the MTTase N-terminal domain. Residues Cys42, Cys78, Cys107, Cys175, Cys179, and Cys182 each coordinate [4Fe-4S] cluster. Residues Leu161 to Glu398 form the Radical SAM core domain. In terms of domain architecture, TRAM spans Ala401–Asp467.

It belongs to the methylthiotransferase family. RimO subfamily. The cofactor is [4Fe-4S] cluster.

Its subcellular location is the cytoplasm. The catalysed reaction is L-aspartate(89)-[ribosomal protein uS12]-hydrogen + (sulfur carrier)-SH + AH2 + 2 S-adenosyl-L-methionine = 3-methylsulfanyl-L-aspartate(89)-[ribosomal protein uS12]-hydrogen + (sulfur carrier)-H + 5'-deoxyadenosine + L-methionine + A + S-adenosyl-L-homocysteine + 2 H(+). Catalyzes the methylthiolation of an aspartic acid residue of ribosomal protein uS12. In Shewanella sp. (strain MR-4), this protein is Ribosomal protein uS12 methylthiotransferase RimO.